Reading from the N-terminus, the 114-residue chain is T cell receptor beta variable 6-4 (114 aa).

Residues 1–21 (MSIRLLCCVAFSLLWAGPVTA) form the signal peptide. One can recognise an Ig-like domain in the interval 22–114 (GITQAPTSQI…TSVYFCASSD (93 aa)). Cys42 and Cys110 form a disulfide bridge.

As to quaternary structure, alpha-beta TR is a heterodimer composed of an alpha and beta chain; disulfide-linked. The alpha-beta TR is associated with the transmembrane signaling CD3 coreceptor proteins to form the TR-CD3 (TcR or TCR). The assembly of alpha-beta TR heterodimers with CD3 occurs in the endoplasmic reticulum where a single alpha-beta TR heterodimer associates with one CD3D-CD3E heterodimer, one CD3G-CD3E heterodimer and one CD247 homodimer forming a stable octameric structure. CD3D-CD3E and CD3G-CD3E heterodimers preferentially associate with TR alpha and TR beta chains, respectively. The association of the CD247 homodimer is the last step of TcR assembly in the endoplasmic reticulum and is required for transport to the cell surface.

It is found in the cell membrane. Functionally, v region of the variable domain of T cell receptor (TR) beta chain that participates in the antigen recognition. Alpha-beta T cell receptors are antigen specific receptors which are essential to the immune response and are present on the cell surface of T lymphocytes. Recognize peptide-major histocompatibility (MH) (pMH) complexes that are displayed by antigen presenting cells (APC), a prerequisite for efficient T cell adaptive immunity against pathogens. Binding of alpha-beta TR to pMH complex initiates TR-CD3 clustering on the cell surface and intracellular activation of LCK that phosphorylates the ITAM motifs of CD3G, CD3D, CD3E and CD247 enabling the recruitment of ZAP70. In turn ZAP70 phosphorylates LAT, which recruits numerous signaling molecules to form the LAT signalosome. The LAT signalosome propagates signal branching to three major signaling pathways, the calcium, the mitogen-activated protein kinase (MAPK) kinase and the nuclear factor NF-kappa-B (NF-kB) pathways, leading to the mobilization of transcription factors that are critical for gene expression and essential for T cell growth and differentiation. The T cell repertoire is generated in the thymus, by V-(D)-J rearrangement. This repertoire is then shaped by intrathymic selection events to generate a peripheral T cell pool of self-MH restricted, non-autoaggressive T cells. Post-thymic interaction of alpha-beta TR with the pMH complexes shapes TR structural and functional avidity. The chain is T cell receptor beta variable 6-4 from Homo sapiens (Human).